A 389-amino-acid chain; its full sequence is Phospho-N-acetylmuramoyl-pentapeptide-transferase (389 aa).

Helical transmembrane passes span 25-45 (RAVM…PAVI), 73-93 (TMGG…WADL), 97-117 (FIWI…VDDY), 135-155 (FWQS…VSEA), 190-210 (ISYP…IVGA), 222-242 (GLVI…AYVM), 259-279 (AGEL…FLWF), 287-307 (FMGD…AVIV), 311-331 (IVLF…MLQV), and 366-386 (QVVV…LSTL).

Belongs to the glycosyltransferase 4 family. MraY subfamily. Mg(2+) serves as cofactor.

Its subcellular location is the cell inner membrane. It catalyses the reaction UDP-N-acetyl-alpha-D-muramoyl-L-alanyl-gamma-D-glutamyl-meso-2,6-diaminopimeloyl-D-alanyl-D-alanine + di-trans,octa-cis-undecaprenyl phosphate = di-trans,octa-cis-undecaprenyl diphospho-N-acetyl-alpha-D-muramoyl-L-alanyl-D-glutamyl-meso-2,6-diaminopimeloyl-D-alanyl-D-alanine + UMP. It functions in the pathway cell wall biogenesis; peptidoglycan biosynthesis. Its function is as follows. Catalyzes the initial step of the lipid cycle reactions in the biosynthesis of the cell wall peptidoglycan: transfers peptidoglycan precursor phospho-MurNAc-pentapeptide from UDP-MurNAc-pentapeptide onto the lipid carrier undecaprenyl phosphate, yielding undecaprenyl-pyrophosphoryl-MurNAc-pentapeptide, known as lipid I. The polypeptide is Phospho-N-acetylmuramoyl-pentapeptide-transferase (Paraburkholderia xenovorans (strain LB400)).